The chain runs to 342 residues: Alanine racemase (342 aa).

The active-site Proton acceptor; specific for D-alanine is lysine 33. Residue lysine 33 is modified to N6-(pyridoxal phosphate)lysine. Arginine 128 is a substrate binding site. Tyrosine 240 functions as the Proton acceptor; specific for L-alanine in the catalytic mechanism. Methionine 288 provides a ligand contact to substrate.

Belongs to the alanine racemase family. Requires pyridoxal 5'-phosphate as cofactor.

The catalysed reaction is L-alanine = D-alanine. Its pathway is amino-acid biosynthesis; D-alanine biosynthesis; D-alanine from L-alanine: step 1/1. Catalyzes the interconversion of L-alanine and D-alanine. May also act on other amino acids. The sequence is that of Alanine racemase (alr) from Jannaschia sp. (strain CCS1).